Consider the following 162-residue polypeptide: Sec-independent protein translocase protein TatB (162 aa).

The chain crosses the membrane as a helical span at residues M1 to G21. Residues I86 to S162 are disordered. The segment covering F108–P117 has biased composition (polar residues). Residues P123 to T135 are compositionally biased toward low complexity. The segment covering D147–S162 has biased composition (polar residues).

The protein belongs to the TatB family. The Tat system comprises two distinct complexes: a TatABC complex, containing multiple copies of TatA, TatB and TatC subunits, and a separate TatA complex, containing only TatA subunits. Substrates initially bind to the TatABC complex, which probably triggers association of the separate TatA complex to form the active translocon.

It localises to the cell inner membrane. In terms of biological role, part of the twin-arginine translocation (Tat) system that transports large folded proteins containing a characteristic twin-arginine motif in their signal peptide across membranes. Together with TatC, TatB is part of a receptor directly interacting with Tat signal peptides. TatB may form an oligomeric binding site that transiently accommodates folded Tat precursor proteins before their translocation. The chain is Sec-independent protein translocase protein TatB from Hydrogenovibrio crunogenus (strain DSM 25203 / XCL-2) (Thiomicrospira crunogena).